Reading from the N-terminus, the 669-residue chain is NADH-ubiquinone oxidoreductase chain 5 (669 aa).

Helical transmembrane passes span 3 to 23, 40 to 60, 76 to 96, 113 to 133, 136 to 156, 217 to 237, 250 to 270, 283 to 303, 319 to 339, 340 to 360, 375 to 395, 417 to 437, 461 to 481, and 619 to 639; these read LLIVFLPLLGSSVAGFFGRFL, SILSLIAFYEVALGASACYLR, FLFDSLTVVMLIVVTFISSLV, FMCYLSIFTFFMLMLVTGDNF, LFLGWEGVGLASYLLIHFWFT, AISLICILLFIGAVGKSAQIG, TPVSALIHAATMVTAGVFMIA, LIVITFAGAMTSFLAATTGIL, LGYMIFACGISNYSVSVFHLM, NHAFFKALLFLSAGSVIHAMS, FPLTYAMMLIGSLSLIGFPFL, NFAFWLGSISVLFTSYYSFRL, IPMAIPSILLALGSLFVGYLA, and GFVYHYAFAMLLGLTLFVTFF.

The protein belongs to the complex I subunit 5 family. As to quaternary structure, complex I is composed of at least 49 different subunits.

The protein localises to the mitochondrion inner membrane. The catalysed reaction is a ubiquinone + NADH + 5 H(+)(in) = a ubiquinol + NAD(+) + 4 H(+)(out). In terms of biological role, core subunit of the mitochondrial membrane respiratory chain NADH dehydrogenase (Complex I) that is believed to belong to the minimal assembly required for catalysis. Complex I functions in the transfer of electrons from NADH to the respiratory chain. The immediate electron acceptor for the enzyme is believed to be ubiquinone. The sequence is that of NADH-ubiquinone oxidoreductase chain 5 (ND5) from Arabidopsis thaliana (Mouse-ear cress).